The chain runs to 292 residues: Small ribosomal subunit biogenesis GTPase RsgA (292 aa).

The region spanning Lys-62 to Leu-213 is the CP-type G domain. Residues Ser-111–Asp-114 and Gly-156–Thr-164 contribute to the GTP site. The Zn(2+) site is built by Cys-237, Cys-242, His-244, and Cys-250.

It belongs to the TRAFAC class YlqF/YawG GTPase family. RsgA subfamily. Monomer. Associates with 30S ribosomal subunit, binds 16S rRNA. Requires Zn(2+) as cofactor.

It is found in the cytoplasm. Its function is as follows. One of several proteins that assist in the late maturation steps of the functional core of the 30S ribosomal subunit. Helps release RbfA from mature subunits. May play a role in the assembly of ribosomal proteins into the subunit. Circularly permuted GTPase that catalyzes slow GTP hydrolysis, GTPase activity is stimulated by the 30S ribosomal subunit. This Streptococcus pneumoniae serotype 4 (strain ATCC BAA-334 / TIGR4) protein is Small ribosomal subunit biogenesis GTPase RsgA.